Here is a 122-residue protein sequence, read N- to C-terminus: Large ribosomal subunit protein uL14c (122 aa).

Belongs to the universal ribosomal protein uL14 family. In terms of assembly, part of the 50S ribosomal subunit.

It is found in the plastid. The protein localises to the chloroplast. Its function is as follows. Binds to 23S rRNA. This is Large ribosomal subunit protein uL14c from Anthoceros angustus (Hornwort).